The sequence spans 88 residues: Small ribosomal subunit protein bS20 (88 aa).

The interval 1–20 is disordered; the sequence is MANHKSAEKRARQTIKRTER.

This sequence belongs to the bacterial ribosomal protein bS20 family.

Functionally, binds directly to 16S ribosomal RNA. The protein is Small ribosomal subunit protein bS20 of Campylobacter fetus subsp. fetus (strain 82-40).